The chain runs to 231 residues: Cytidylate kinase 1 (231 aa).

Position 7–15 (7–15) interacts with ATP; the sequence is GPSGAGKGT.

This sequence belongs to the cytidylate kinase family. Type 1 subfamily.

It localises to the cytoplasm. The enzyme catalyses CMP + ATP = CDP + ADP. It catalyses the reaction dCMP + ATP = dCDP + ADP. This chain is Cytidylate kinase 1, found in Haemophilus influenzae (strain ATCC 51907 / DSM 11121 / KW20 / Rd).